Here is a 322-residue protein sequence, read N- to C-terminus: Ornithine carbamoyltransferase (322 aa).

Residues 67–70 (STRT), Gln94, Arg118, and 145–148 (HPCQ) each bind carbamoyl phosphate. Residues Asn176, Asp240, and 244-245 (SM) contribute to the L-ornithine site. Carbamoyl phosphate-binding positions include 280–281 (CL) and Arg308.

It belongs to the aspartate/ornithine carbamoyltransferase superfamily. OTCase family.

Its subcellular location is the cytoplasm. The enzyme catalyses carbamoyl phosphate + L-ornithine = L-citrulline + phosphate + H(+). Its pathway is amino-acid biosynthesis; L-arginine biosynthesis; L-arginine from L-ornithine and carbamoyl phosphate: step 1/3. Its function is as follows. Reversibly catalyzes the transfer of the carbamoyl group from carbamoyl phosphate (CP) to the N(epsilon) atom of ornithine (ORN) to produce L-citrulline. This Oceanobacillus iheyensis (strain DSM 14371 / CIP 107618 / JCM 11309 / KCTC 3954 / HTE831) protein is Ornithine carbamoyltransferase.